The following is a 60-amino-acid chain: Large ribosomal subunit protein uL30 (60 aa).

It belongs to the universal ribosomal protein uL30 family. As to quaternary structure, part of the 50S ribosomal subunit.

The polypeptide is Large ribosomal subunit protein uL30 (Shewanella baltica (strain OS223)).